Here is a 100-residue protein sequence, read N- to C-terminus: Putative pterin-4-alpha-carbinolamine dehydratase 2 (100 aa).

The protein belongs to the pterin-4-alpha-carbinolamine dehydratase family.

The enzyme catalyses (4aS,6R)-4a-hydroxy-L-erythro-5,6,7,8-tetrahydrobiopterin = (6R)-L-erythro-6,7-dihydrobiopterin + H2O. The protein is Putative pterin-4-alpha-carbinolamine dehydratase 2 of Cupriavidus pinatubonensis (strain JMP 134 / LMG 1197) (Cupriavidus necator (strain JMP 134)).